The primary structure comprises 450 residues: uncharacterized protein (450 aa).

The TRAM domain maps to 1 to 58 (MAKGEIVTVKIEEMDFKGYGVGYCEGKPLKVRGGILGQRVAVRVKKGKKGRAEGEIVE). 4 residues coordinate [4Fe-4S] cluster: Cys-71, Cys-77, Cys-80, and Cys-159. Residues Gln-285, Tyr-314, Glu-335, and Asp-380 each contribute to the S-adenosyl-L-methionine site. Residue Cys-407 is the Nucleophile of the active site.

It belongs to the class I-like SAM-binding methyltransferase superfamily. RNA M5U methyltransferase family.

This is an uncharacterized protein from Caldanaerobacter subterraneus subsp. tengcongensis (strain DSM 15242 / JCM 11007 / NBRC 100824 / MB4) (Thermoanaerobacter tengcongensis).